Consider the following 422-residue polypeptide: Glyceraldehyde-3-phosphate dehydrogenase GAPCP1, chloroplastic (422 aa).

The transit peptide at 1 to 69 (MAFSSLLRSA…NARSVQPIKA (69 aa)) directs the protein to the chloroplast. The span at 50 to 63 (SGISSSLQNGNARS) shows a compositional bias: polar residues. The segment at 50–84 (SGISSSLQNGNARSVQPIKATATEVPSAVRRSSSS) is disordered. Thr-70 bears the N-acetylthreonine mark. Residues 96 to 97 (RI), Asp-118, and Arg-164 contribute to the NAD(+) site. D-glyceraldehyde 3-phosphate contacts are provided by residues 235-237 (SCT), Thr-266, 295-296 (TG), and Arg-318. The Nucleophile role is filled by Cys-236. Asn-400 serves as a coordination point for NAD(+).

Belongs to the glyceraldehyde-3-phosphate dehydrogenase family. Homotetramer. In terms of tissue distribution, expressed in shoot and root vasculature, leaf veins and vascular tissue of flowers and siliques.

The protein resides in the plastid. It is found in the chloroplast stroma. It carries out the reaction D-glyceraldehyde 3-phosphate + phosphate + NAD(+) = (2R)-3-phospho-glyceroyl phosphate + NADH + H(+). Its function is as follows. Involved in plastidial glycolytic pathway and plays a specific role in glycolytic energy production in non-green plastids and chloroplasts. Essential for breakdown of starch to form sucrose for export to non-photosynthetic tissues, and to generate primary metabolites for anabolic pathways such as fatty acid and amino acid synthesis. Plays an important role in plant development by providing substrates for the phosphorylated pathway of serine biosynthesis in roots. Plays a crucial role in pollen development. Functionally redundant with GAPCP2. This chain is Glyceraldehyde-3-phosphate dehydrogenase GAPCP1, chloroplastic (GAPCP1), found in Arabidopsis thaliana (Mouse-ear cress).